The sequence spans 161 residues: Nucleotide-binding protein Pfl01_4421 (161 aa).

The protein belongs to the YajQ family.

Functionally, nucleotide-binding protein. In Pseudomonas fluorescens (strain Pf0-1), this protein is Nucleotide-binding protein Pfl01_4421.